The chain runs to 293 residues: Putative DNA glycosylase At3g47830 (293 aa).

A compositionally biased stretch (basic residues) spans 1 to 10 (MSKAQKRKRL). Residues 1–34 (MSKAQKRKRLNKYDGESKTPANKSTVDGGNPYPT) are disordered. Positions 108 and 151 each coordinate DNA. K196 serves as the catalytic Schiff-base intermediate with DNA. Positions 216 and 232 each coordinate DNA.

It belongs to the DNA glycosylase family.

In Arabidopsis thaliana (Mouse-ear cress), this protein is Putative DNA glycosylase At3g47830.